We begin with the raw amino-acid sequence, 355 residues long: Elongation factor Ts, mitochondrial (355 aa).

A mitochondrion-targeting transit peptide spans 1–46 (MIRSLNFALRNCNKNILINSNKITINNGLLLKKNNFCTQSTSEVKV).

This sequence belongs to the EF-Ts family.

The protein localises to the mitochondrion. In terms of biological role, associates with the EF-Tu.GDP complex and induces the exchange of GDP to GTP. It remains bound to the aminoacyl-tRNA.EF-Tu.GTP complex up to the GTP hydrolysis stage on the ribosome. The chain is Elongation factor Ts, mitochondrial (tsfm) from Dictyostelium discoideum (Social amoeba).